Here is a 500-residue protein sequence, read N- to C-terminus: UDP-N-acetylmuramoyl-L-alanyl-D-glutamate--2,6-diaminopimelate ligase (500 aa).

UDP-N-acetyl-alpha-D-muramoyl-L-alanyl-D-glutamate contacts are provided by residues L26, S28, and 43–45 (HQV). 123–129 (GTNGKTT) serves as a coordination point for ATP. UDP-N-acetyl-alpha-D-muramoyl-L-alanyl-D-glutamate is bound by residues N164, 165-166 (TT), S192, Q198, and R200. Position 232 is an N6-carboxylysine (K232). Meso-2,6-diaminopimelate is bound by residues R399, 423 to 426 (DNPR), G474, and E478. The Meso-diaminopimelate recognition motif signature appears at 423–426 (DNPR).

Belongs to the MurCDEF family. MurE subfamily. Mg(2+) is required as a cofactor. Carboxylation is probably crucial for Mg(2+) binding and, consequently, for the gamma-phosphate positioning of ATP.

The protein localises to the cytoplasm. The catalysed reaction is UDP-N-acetyl-alpha-D-muramoyl-L-alanyl-D-glutamate + meso-2,6-diaminopimelate + ATP = UDP-N-acetyl-alpha-D-muramoyl-L-alanyl-gamma-D-glutamyl-meso-2,6-diaminopimelate + ADP + phosphate + H(+). It participates in cell wall biogenesis; peptidoglycan biosynthesis. Functionally, catalyzes the addition of meso-diaminopimelic acid to the nucleotide precursor UDP-N-acetylmuramoyl-L-alanyl-D-glutamate (UMAG) in the biosynthesis of bacterial cell-wall peptidoglycan. This Actinobacillus pleuropneumoniae serotype 5b (strain L20) protein is UDP-N-acetylmuramoyl-L-alanyl-D-glutamate--2,6-diaminopimelate ligase.